The following is a 73-amino-acid chain: Cell division protein ZapB (73 aa).

Residues L3 to V66 are a coiled coil.

This sequence belongs to the ZapB family. As to quaternary structure, homodimer. The ends of the coiled-coil dimer bind to each other, forming polymers. Interacts with FtsZ.

The protein localises to the cytoplasm. Functionally, non-essential, abundant cell division factor that is required for proper Z-ring formation. It is recruited early to the divisome by direct interaction with FtsZ, stimulating Z-ring assembly and thereby promoting cell division earlier in the cell cycle. Its recruitment to the Z-ring requires functional FtsA or ZipA. This chain is Cell division protein ZapB, found in Shewanella baltica (strain OS223).